The sequence spans 502 residues: Glycogen synthase (502 aa).

Lys24 provides a ligand contact to ADP-alpha-D-glucose.

This sequence belongs to the glycosyltransferase 1 family. Bacterial/plant glycogen synthase subfamily.

The enzyme catalyses [(1-&gt;4)-alpha-D-glucosyl](n) + ADP-alpha-D-glucose = [(1-&gt;4)-alpha-D-glucosyl](n+1) + ADP + H(+). The protein operates within glycan biosynthesis; glycogen biosynthesis. Synthesizes alpha-1,4-glucan chains using ADP-glucose. This is Glycogen synthase from Nitrosomonas eutropha (strain DSM 101675 / C91 / Nm57).